Here is a 523-residue protein sequence, read N- to C-terminus: 2-isopropylmalate synthase (523 aa).

In terms of domain architecture, Pyruvate carboxyltransferase spans 5-267 (VIIFDTTLRD…HTAINHQEIW (263 aa)). Mn(2+) contacts are provided by D14, H202, H204, and N238. The regulatory domain stretch occupies residues 392–523 (RLDYFSVQSG…QHNENNKETV (132 aa)).

The protein belongs to the alpha-IPM synthase/homocitrate synthase family. LeuA type 1 subfamily. As to quaternary structure, homodimer. Mn(2+) serves as cofactor.

Its subcellular location is the cytoplasm. It catalyses the reaction 3-methyl-2-oxobutanoate + acetyl-CoA + H2O = (2S)-2-isopropylmalate + CoA + H(+). It functions in the pathway amino-acid biosynthesis; L-leucine biosynthesis; L-leucine from 3-methyl-2-oxobutanoate: step 1/4. Its function is as follows. Catalyzes the condensation of the acetyl group of acetyl-CoA with 3-methyl-2-oxobutanoate (2-ketoisovalerate) to form 3-carboxy-3-hydroxy-4-methylpentanoate (2-isopropylmalate). This Escherichia coli O127:H6 (strain E2348/69 / EPEC) protein is 2-isopropylmalate synthase.